A 212-amino-acid polypeptide reads, in one-letter code: Holliday junction branch migration complex subunit RuvA (212 aa).

The interval 1 to 63 (MIAKLKGLID…EDAISLFGFL (63 aa)) is domain I. The tract at residues 64–142 (ETGERDWFRL…KIALGGFSPG (79 aa)) is domain II. Positions 143-155 (GIKDALSASAPLP) are flexible linker. The segment at 156–212 (AASGRMEDAVSALVNLGYKRLEAFQAVGETARELGDEADSSALIRAALKHLGKGLLG) is domain III.

Belongs to the RuvA family. In terms of assembly, homotetramer. Forms an RuvA(8)-RuvB(12)-Holliday junction (HJ) complex. HJ DNA is sandwiched between 2 RuvA tetramers; dsDNA enters through RuvA and exits via RuvB. An RuvB hexamer assembles on each DNA strand where it exits the tetramer. Each RuvB hexamer is contacted by two RuvA subunits (via domain III) on 2 adjacent RuvB subunits; this complex drives branch migration. In the full resolvosome a probable DNA-RuvA(4)-RuvB(12)-RuvC(2) complex forms which resolves the HJ.

It is found in the cytoplasm. The RuvA-RuvB-RuvC complex processes Holliday junction (HJ) DNA during genetic recombination and DNA repair, while the RuvA-RuvB complex plays an important role in the rescue of blocked DNA replication forks via replication fork reversal (RFR). RuvA specifically binds to HJ cruciform DNA, conferring on it an open structure. The RuvB hexamer acts as an ATP-dependent pump, pulling dsDNA into and through the RuvAB complex. HJ branch migration allows RuvC to scan DNA until it finds its consensus sequence, where it cleaves and resolves the cruciform DNA. The chain is Holliday junction branch migration complex subunit RuvA from Paramagnetospirillum magneticum (strain ATCC 700264 / AMB-1) (Magnetospirillum magneticum).